A 207-amino-acid polypeptide reads, in one-letter code: Hemin/hemoglobin-binding protein 1 (207 aa).

The N-terminal stretch at 1-27 (MKKVLVFAAFIVLFSFSFLSTGLTAQA) is a signal peptide. The NEAT domain maps to 29-148 (LKDGTYSVDY…RFDEGSAKAL (120 aa)). A disordered region spans residues 151–178 (AVKSSDNNTTTPATKSDSSNKVTNPKSS). Over residues 154–178 (SSDNNTTTPATKSDSSNKVTNPKSS) the composition is skewed to polar residues. An NPKXZ sorting signal motif is present at residues 174–178 (NPKSS). S177 carries the murein peptidoglycan amidated serine modification. Positions 178 to 207 (SDSSQMFLYGIIFVATGAGLILLKRRAIFK) are cleaved as a propeptide — removed by sortase B.

The protein resides in the secreted. It is found in the cell wall. Its function is as follows. Binds both host hemin and hemoglobin with affinity in the nanomolar range and presumably directs it to membrane transporters. This chain is Hemin/hemoglobin-binding protein 1, found in Listeria monocytogenes serovar 1/2a (strain ATCC BAA-679 / EGD-e).